We begin with the raw amino-acid sequence, 344 residues long: Beta-1,4-galactosyltransferase 4 (344 aa).

Residues 1 to 12 (MGCNPPYHLSYR) lie on the Cytoplasmic side of the membrane. A helical; Signal-anchor for type II membrane protein membrane pass occupies residues 13 to 38 (LRLLLLFTLCLTVVGWATSNYFVGAI). The Lumenal segment spans residues 39-344 (QVIPKAKDFM…NITVDFWTAA (306 aa)). Cys-77 and Cys-118 are joined by a disulfide. UDP-alpha-D-galactose is bound by residues 129–133 (PHRNR), 168–170 (FNR), and 195–196 (VD). Cysteines 189 and 208 form a disulfide. A Mn(2+)-binding site is contributed by Asp-196. The N-linked (GlcNAc...) asparagine glycan is linked to Asn-220. Positions 224 and 256 each coordinate UDP-alpha-D-galactose. 258-261 (GEDD) serves as a coordination point for N-acetyl-D-glucosamine. A Mn(2+)-binding site is contributed by His-289. UDP-alpha-D-galactose is bound at residue 289–291 (HTR). Arg-301 contacts N-acetyl-D-glucosamine. Residue Asn-335 is glycosylated (N-linked (GlcNAc...) asparagine).

It belongs to the glycosyltransferase 7 family. As to quaternary structure, interacts with SLC35A2/UGT1. Mn(2+) is required as a cofactor.

It localises to the golgi apparatus membrane. Its subcellular location is the secreted. It catalyses the reaction N-acetyl-D-glucosamine + UDP-alpha-D-galactose = beta-D-galactosyl-(1-&gt;4)-N-acetyl-D-glucosamine + UDP + H(+). It carries out the reaction a beta-D-GlcNAc-(1-&gt;3)-beta-D-Gal-(1-&gt;4)-beta-D-Glc-(1&lt;-&gt;1)-Cer(d18:1(4E)) + UDP-alpha-D-galactose = a neolactoside nLc4Cer(d18:1(4E)) + UDP + H(+). The catalysed reaction is 3-O-{beta-D-galactosyl-(1-&gt;3)-[6-O-sulfo-N-acetyl-beta-D-glucosaminyl-(1-&gt;6)]-N-acetyl-alpha-D-galactosaminyl}-L-seryl-[protein] + UDP-alpha-D-galactose = 3-O-{beta-D-galactosyl-(1-&gt;3)-[beta-D-galactosyl-(1-&gt;4)-6-O-sulfo-N-acetyl-beta-D-glucosaminyl-(1-&gt;6)]-N-acetyl-alpha-D-galactosaminyl}-L-seryl-[protein] + UDP + H(+). The enzyme catalyses 3-O-{beta-D-galactosyl-(1-&gt;3)-[6-O-sulfo-N-acetyl-beta-D-glucosaminyl-(1-&gt;6)]-N-acetyl-alpha-D-galactosaminyl}-L-threonyl-[protein] + UDP-alpha-D-galactose = 3-O-{beta-D-galactosyl-(1-&gt;3)-[beta-D-galactosyl-(1-&gt;4)-6-O-sulfo-N-acetyl-beta-D-glucosaminyl-(1-&gt;6)]-N-acetyl-alpha-D-galactosaminyl}-L-threonyl-[protein] + UDP + H(+). The protein operates within protein modification; protein glycosylation. It participates in glycolipid biosynthesis. In terms of biological role, galactose (Gal) transferase involved in the synthesis of terminal N-acetyllactosamine (LacNac) unit present on glycan chains of glycoproteins and glycosphingolipids. Catalyzes the transfer of Gal residue via a beta1-&gt;4 linkage from UDP-Gal to the non-reducing terminal N-acetyl glucosamine 6-O-sulfate (6-O-sulfoGlcNAc) in the linearly growing chain of both N- and O-linked keratan sulfate proteoglycans. Cooperates with B3GNT7 N-acetyl glucosamine transferase and CHST6 and CHST1 sulfotransferases to construct and elongate mono- and disulfated disaccharide units [-&gt;3Galbeta1-&gt;4(6-sulfoGlcNAcbeta)1-&gt;] and [-&gt;3(6-sulfoGalbeta)1-&gt;4(6-sulfoGlcNAcbeta)1-&gt;] within keratan sulfate polymer. Transfers Gal residue via a beta1-&gt;4 linkage to terminal 6-O-sulfoGlcNAc within the LacNac unit of core 2 O-glycans forming 6-sulfo-sialyl-Lewis X (sLex). May contribute to the generation of sLex epitope on mucin-type glycoproteins that serve as ligands for SELL/L-selectin, a major regulator of leukocyte migration. In the biosynthesis pathway of neolacto-series glycosphingolipids, transfers Gal residue via a beta1-&gt;4 linkage to terminal GlcNAc of a lactotriaosylceramide (Lc3Cer) acceptor to form a neolactotetraosylceramide. The polypeptide is Beta-1,4-galactosyltransferase 4 (Mus musculus (Mouse)).